Consider the following 1101-residue polypeptide: Serine/threonine-protein kinase PSK2 (1101 aa).

T118 carries the phosphothreonine modification. One can recognise a Protein kinase domain in the interval 841 to 1099; sequence FTILQVMGEG…IDEIYEDKWL (259 aa). ATP contacts are provided by residues 847 to 855 and K870; that span reads MGEGAYGKV. Catalysis depends on D975, which acts as the Proton acceptor.

Belongs to the protein kinase superfamily. Ser/Thr protein kinase family.

The protein resides in the cytoplasm. It carries out the reaction L-seryl-[protein] + ATP = O-phospho-L-seryl-[protein] + ADP + H(+). The catalysed reaction is L-threonyl-[protein] + ATP = O-phospho-L-threonyl-[protein] + ADP + H(+). Serine/threonine-protein kinase involved in the control of sugar metabolism and translation. Phosphorylates UGP1, which is required for normal glycogen and beta-(1,6)-glucan synthesis. This phosphorylation shifts glucose partitioning toward cell wall glucan synthesis at the expense of glycogen synthesis. Also phosphorylates the glycogen synthase GSY2 and the translation factors CAF20, TIF11 and SRO9. This Saccharomyces cerevisiae (strain ATCC 204508 / S288c) (Baker's yeast) protein is Serine/threonine-protein kinase PSK2 (PSK2).